The sequence spans 483 residues: MDAPLIASVILPEFGKGTVATDNIPIGKIIIRKRVDILSLDSANLTRTCSTCTEEKVKTQRCAACKIIHYCSKGCQKADWPFHKLECKALQASKQNGILPSVCRLLIRLYLLWQKNPAIIEPMEGHQNEFQAVSSSWSDAELIASAASHYTQIYQAELFQKLFCRLAVNAMNLVTSSFDSLGMCLDTILCRLNHSCDPNCQIIFDGAIVQLVSKRDIKKDEQLFISYIDIRLPKSIRQKQLLKKYFFSCYCPRCENDHTTKETDGSKWMGRLRNSKSLMKNLAMARDLWSCGWKQTAFPWSNLLHHIKLGMLDESNFNGAFAALYLKSSADEFLDALHVVDEYQLLLLGKQVAMEVKHLMFPNDKPLEMEFPSSSQPQQTVPTNNSLFLLKNIPSFGGLHHCILGRYSISLDDFVLWLLDRAQRLQQAVRISHPSTTFCSNVENDIKEIFEVCKDYCMLHVQNNLKAFEEKLWAACKDFLVTY.

The SET domain occupies 4–228 (PLIASVILPE…KDEQLFISYI (225 aa)). Positions 49, 52, 62, 65, 71, 75, 83, and 87 each coordinate Zn(2+). The MYND-type zinc finger occupies 49 to 87 (CSTCTEEKVKTQRCAACKIIHYCSKGCQKADWPFHKLEC).

This sequence belongs to the class V-like SAM-binding methyltransferase superfamily.

It localises to the cytoplasm. It is found in the nucleus. The protein is SET domain and MYND-type zinc finger protein 6 (set6) of Schizosaccharomyces pombe (strain 972 / ATCC 24843) (Fission yeast).